A 188-amino-acid chain; its full sequence is Elongation factor P-like protein (188 aa).

It belongs to the elongation factor P family.

In Aliivibrio fischeri (strain ATCC 700601 / ES114) (Vibrio fischeri), this protein is Elongation factor P-like protein.